Reading from the N-terminus, the 471-residue chain is Paraneoplastic antigen-like protein 8A (471 aa).

2 disordered regions span residues 188–300 (SAAG…EGSA) and 321–471 (ASRG…PSAV). Basic residues predominate over residues 238–247 (HSRRKRQKKT). Residues 256–269 (KKSQGSHSHSSASL) are compositionally biased toward low complexity. The segment covering 270-287 (KHPEADDGKNRERLEHVR) has biased composition (basic and acidic residues).

It belongs to the PNMA family.

The chain is Paraneoplastic antigen-like protein 8A (PNMA8A) from Bos taurus (Bovine).